The sequence spans 692 residues: Threonine--tRNA ligase (692 aa).

The interval Met1–Arg20 is disordered. The TGS domain maps to Met1–Ala74. The segment at Asp269–Pro575 is catalytic. 3 residues coordinate Zn(2+): Cys374, His425, and His552.

It belongs to the class-II aminoacyl-tRNA synthetase family. As to quaternary structure, homodimer. Zn(2+) serves as cofactor.

The protein localises to the cytoplasm. The catalysed reaction is tRNA(Thr) + L-threonine + ATP = L-threonyl-tRNA(Thr) + AMP + diphosphate + H(+). Catalyzes the attachment of threonine to tRNA(Thr) in a two-step reaction: L-threonine is first activated by ATP to form Thr-AMP and then transferred to the acceptor end of tRNA(Thr). Also edits incorrectly charged L-seryl-tRNA(Thr). This chain is Threonine--tRNA ligase, found in Mycobacterium tuberculosis (strain CDC 1551 / Oshkosh).